We begin with the raw amino-acid sequence, 180 residues long: Putative 5'(3')-deoxyribonucleotidase (180 aa).

Asp-9 (nucleophile) is an active-site residue. Positions 9, 11, and 135 each coordinate Mg(2+). The active-site Proton donor is Asp-11.

The protein belongs to the 5'(3')-deoxyribonucleotidase family. It depends on Mg(2+) as a cofactor.

Dephosphorylates the 5' and 2'(3')-phosphates of deoxyribonucleotides. This chain is Putative 5'(3')-deoxyribonucleotidase, found in Staphylococcus aureus (strain MSSA476).